The chain runs to 182 residues: MSKQLNPAVPDQPIVLGKMGSTYGIRGWLRVFSSTENAESIFDYQPWFIQQAGKWQHVELEDWKRHSQDLIIKVKGVDDREAANLLTNCEIIVDSTQLPALEEDDYYWKDLMGCQVVTTTGYELGKIIDMMETGSNDVMVVKANLKDAFGMKERLVPFLHGQVIKKVDLTAQRVEVDWDPGF.

The 80-residue stretch at 103 to 182 (EDDYYWKDLM…RVEVDWDPGF (80 aa)) folds into the PRC barrel domain.

The protein belongs to the RimM family. Binds ribosomal protein uS19.

Its subcellular location is the cytoplasm. Functionally, an accessory protein needed during the final step in the assembly of 30S ribosomal subunit, possibly for assembly of the head region. Essential for efficient processing of 16S rRNA. May be needed both before and after RbfA during the maturation of 16S rRNA. It has affinity for free ribosomal 30S subunits but not for 70S ribosomes. The chain is Ribosome maturation factor RimM from Yersinia pestis bv. Antiqua (strain Antiqua).